We begin with the raw amino-acid sequence, 98 residues long: Large ribosomal subunit protein uL23 (98 aa).

Belongs to the universal ribosomal protein uL23 family. As to quaternary structure, part of the 50S ribosomal subunit. Contacts protein L29, and trigger factor when it is bound to the ribosome.

Its function is as follows. One of the early assembly proteins it binds 23S rRNA. One of the proteins that surrounds the polypeptide exit tunnel on the outside of the ribosome. Forms the main docking site for trigger factor binding to the ribosome. This chain is Large ribosomal subunit protein uL23, found in Rickettsia canadensis (strain McKiel).